A 661-amino-acid polypeptide reads, in one-letter code: mRNA 3'-end-processing protein RNA14 (661 aa).

A disordered region spans residues Met1–Asp29. Low complexity predominate over residues Pro12–Thr24. HAT repeat units lie at residues Lys62 to Asp94, Leu99 to Lys133, Glu143 to His179, Gln190 to Asp223, Thr264 to Asp296, and Leu305 to Glu337.

It is found in the nucleus. The protein resides in the cytoplasm. In terms of biological role, component of the cleavage factor IA (CFIA) complex, which is involved in the endonucleolytic cleavage during polyadenylation-dependent pre-mRNA 3'-end formation. This is mRNA 3'-end-processing protein RNA14 (RNA14) from Kluyveromyces lactis (strain ATCC 8585 / CBS 2359 / DSM 70799 / NBRC 1267 / NRRL Y-1140 / WM37) (Yeast).